Reading from the N-terminus, the 763-residue chain is Phosphoglycerol transferase I (763 aa).

Helical transmembrane passes span 1–21 (MSEL…AWKA), 26–46 (WWFA…ITLF), 77–97 (ILPG…LGWI), and 108–128 (FGYS…SPAF).

This sequence belongs to the OpgB family.

It is found in the cell inner membrane. It catalyses the reaction a phosphatidylglycerol + a membrane-derived-oligosaccharide D-glucose = a 1,2-diacyl-sn-glycerol + a membrane-derived-oligosaccharide 6-(glycerophospho)-D-glucose.. The protein operates within glycan metabolism; osmoregulated periplasmic glucan (OPG) biosynthesis. Its function is as follows. Transfers a phosphoglycerol residue from phosphatidylglycerol to the membrane-bound nascent glucan backbones. In Escherichia coli (strain SMS-3-5 / SECEC), this protein is Phosphoglycerol transferase I.